Here is a 160-residue protein sequence, read N- to C-terminus: SsrA-binding protein (160 aa).

This sequence belongs to the SmpB family.

It is found in the cytoplasm. In terms of biological role, required for rescue of stalled ribosomes mediated by trans-translation. Binds to transfer-messenger RNA (tmRNA), required for stable association of tmRNA with ribosomes. tmRNA and SmpB together mimic tRNA shape, replacing the anticodon stem-loop with SmpB. tmRNA is encoded by the ssrA gene; the 2 termini fold to resemble tRNA(Ala) and it encodes a 'tag peptide', a short internal open reading frame. During trans-translation Ala-aminoacylated tmRNA acts like a tRNA, entering the A-site of stalled ribosomes, displacing the stalled mRNA. The ribosome then switches to translate the ORF on the tmRNA; the nascent peptide is terminated with the 'tag peptide' encoded by the tmRNA and targeted for degradation. The ribosome is freed to recommence translation, which seems to be the essential function of trans-translation. The polypeptide is SsrA-binding protein (Erwinia tasmaniensis (strain DSM 17950 / CFBP 7177 / CIP 109463 / NCPPB 4357 / Et1/99)).